Reading from the N-terminus, the 371-residue chain is Glycosyltransferase 8 domain-containing protein 1 (371 aa).

Over 1-7 (MSFRKVH) the chain is Cytoplasmic. The chain crosses the membrane as a helical; Signal-anchor for type II membrane protein span at residues 8 to 28 (IAIILLAAVVFLLILHHNILG). The Lumenal portion of the chain corresponds to 29–371 (LTDILTRQSS…RRHGEADGTK (343 aa)). N-linked (GlcNAc...) asparagine glycosylation is found at Asn104, Asn249, and Asn257.

The protein belongs to the glycosyltransferase 8 family.

It localises to the membrane. This is Glycosyltransferase 8 domain-containing protein 1 (glt8d1) from Xenopus tropicalis (Western clawed frog).